The following is a 463-amino-acid chain: Glucagon-like peptide 1 receptor (463 aa).

The first 21 residues, 1–21 (MAVTPSLLRLALLLLGAVGRA), serve as a signal peptide directing secretion. Over 22 to 139 (GPRPQGATVS…KQGERNSPEE (118 aa)) the chain is Extracellular. 3 disulfides stabilise this stretch: Cys46-Cys71, Cys62-Cys104, and Cys85-Cys126. N-linked (GlcNAc...) asparagine glycans are attached at residues Asn63, Asn82, and Asn115. Residues 140 to 164 (QLLSLYIIYTVGYALSFSALVIASA) form a helical membrane-spanning segment. The Cytoplasmic portion of the chain corresponds to 165 to 175 (ILVSFRHLHCT). A helical membrane pass occupies residues 176–201 (RNYIHLNLFASFILRALSVFIKDAAL). Over 202 to 227 (KWMYSTAAQQHQWDGLLSYQDSLGCR) the chain is Extracellular. Cys226 and Cys296 are joined by a disulfide. The helical transmembrane segment at 228 to 251 (LVFLLMQYCVAANYYWLLVEGVYL) threads the bilayer. At 252 to 265 (YTLLAFSVFSEQRI) the chain is on the cytoplasmic side. Residues 266–290 (FKLYLSIGWGVPLLFVIPWGIVKYL) form a helical membrane-spanning segment. At 291 to 305 (YEDEGCWTRNSNMNY) the chain is on the extracellular side. The helical transmembrane segment at 306–328 (WLIIRLPILFAIGVNFLVFIRVI) threads the bilayer. Topologically, residues 329 to 348 (CIVIAKLKANLMCKTDIKCR) are cytoplasmic. Position 341 is an ADP-ribosylcysteine (Cys341). Arg348 is subject to ADP-ribosylarginine. The helical transmembrane segment at 349–370 (LAKSTLTLIPLLGTHEVIFAFV) threads the bilayer. The segment at 352–355 (STLT) is important for allosteric inhibitor binding. Residues 371–383 (MDEHARGTLRFVK) lie on the Extracellular side of the membrane. A helical membrane pass occupies residues 384–404 (LFTELSFTSFQGFMVAVLYCF). Topologically, residues 405–463 (VNNEVQMEFRKSWERWRLERLNIQRDSSMKPLKCPTSSVSSGATVGSSVYAATCQNSCS) are cytoplasmic.

The protein belongs to the G-protein coupled receptor 2 family. In terms of assembly, may form homodimers and heterodimers with GIPR. In terms of processing, N-glycosylation enhances cell surface expression and lengthens receptor half-life by preventing degradation in the ER. As to expression, pancreatic islets, stomach, lung, rat insulinoma cell line.

The protein resides in the cell membrane. Functionally, G-protein coupled receptor for glucagon-like peptide 1 (GLP-1). Ligand binding triggers activation of a signaling cascade that leads to the activation of adenylyl cyclase and increased intracellular cAMP levels. Plays a role in regulating insulin secretion in response to GLP-1. The chain is Glucagon-like peptide 1 receptor (Glp1r) from Rattus norvegicus (Rat).